A 323-amino-acid polypeptide reads, in one-letter code: Elongation factor P--(R)-beta-lysine ligase (323 aa).

74–76 (SPE) provides a ligand contact to substrate. ATP-binding positions include 98–100 (RNE) and Asn-107. Tyr-116 lines the substrate pocket. 242–243 (EL) contributes to the ATP binding site. Residue Glu-249 participates in substrate binding. Residue Gly-298 participates in ATP binding.

This sequence belongs to the class-II aminoacyl-tRNA synthetase family. EpmA subfamily. Homodimer.

The enzyme catalyses D-beta-lysine + L-lysyl-[protein] + ATP = N(6)-((3R)-3,6-diaminohexanoyl)-L-lysyl-[protein] + AMP + diphosphate + H(+). With EpmB is involved in the beta-lysylation step of the post-translational modification of translation elongation factor P (EF-P). Catalyzes the ATP-dependent activation of (R)-beta-lysine produced by EpmB, forming a lysyl-adenylate, from which the beta-lysyl moiety is then transferred to the epsilon-amino group of a conserved specific lysine residue in EF-P. In Vibrio atlanticus (strain LGP32) (Vibrio splendidus (strain Mel32)), this protein is Elongation factor P--(R)-beta-lysine ligase.